Consider the following 1996-residue polypeptide: Protein Shroom3 (1996 aa).

The PDZ domain occupies 25–110; that stretch reads YIYLEAFLEG…TLRLVVRRDV (86 aa). The segment at 150 to 173 is disordered; that stretch reads KHRRSEPAGRPHSWHTTKSGEKQP. Phosphoserine is present on S213. Disordered stretches follow at residues 340-389, 437-468, 568-629, 673-772, and 788-1053; these read NGQG…PARS, EKSP…TSIY, DASL…WEGD, RRHS…LQGF, and FEQR…PESS. Phosphoserine occurs at positions 439 and 443. Residues 700–718 show a composition bias toward basic and acidic residues; sequence KAEDPGRKAAPDLGSHLDR. The segment covering 750 to 768 has biased composition (low complexity); the sequence is HPHTSSLGRRGPGPGSASA. A compositionally biased stretch (polar residues) spans 814–823; it reads TVSTSSTSGN. Phosphoserine is present on S816. 2 stretches are compositionally biased toward basic and acidic residues: residues 826 to 836 and 846 to 859; these read EETKAHIRFSE and QHFK…EEAS. Polar residues-rich tracts occupy residues 862 to 871 and 887 to 896; these read PCGQQLSGGA and RSQSTFQLSS. S890 bears the Phosphoserine mark. Basic and acidic residues predominate over residues 897 to 909; that stretch reads EPEREPEWRDRPG. S910 and S913 each carry phosphoserine. One can recognise an ASD1 domain in the interval 928 to 1030; that stretch reads IKDAQSRVLG…SEPEKMNEVG (103 aa). Over residues 950-964 the composition is skewed to low complexity; that stretch reads APVASRSWRPRPSSA. Residue S970 is modified to Phosphoserine. Over residues 1011-1027 the composition is skewed to basic and acidic residues; sequence LTPEQKKRSYSEPEKMN. Residues S1069 and S1072 each carry the phosphoserine modification. Disordered stretches follow at residues 1093 to 1115, 1137 to 1223, 1315 to 1573, and 1627 to 1665; these read KTGK…LRER, SSLS…MSAE, ECPG…SFNK, and SLGG…SSED. Low complexity predominate over residues 1137–1148; sequence SSLSSLREPSLQ. Position 1221 is a phosphoserine (S1221). Residues 1366 to 1375 show a composition bias toward polar residues; that stretch reads YCSQDGQTGR. Residues 1403 to 1417 are compositionally biased toward basic and acidic residues; the sequence is CEGDGPEHGVEEGTR. Phosphoserine is present on S1441. Polar residues predominate over residues 1459–1472; sequence KQQSLPSLCSTSDP. Basic and acidic residues predominate over residues 1498 to 1515; sequence PPPHEDYEDEVFVRDPHP. Pro residues predominate over residues 1524-1536; the sequence is EPLPPPPPPPPSQ. Residues 1634–1649 are compositionally biased toward polar residues; the sequence is PIQTQSLSHDPVSGTQ. Residues 1651–1665 show a composition bias toward basic and acidic residues; the sequence is LEKKVSPDPQKSSED. The region spanning 1669–1957 is the ASD2 domain; sequence EALAKEIVHQ…QVKCLLESLP (289 aa).

Belongs to the shroom family. As to quaternary structure, interacts with F-actin. Interacts with ROCK1.

The protein resides in the cell junction. It is found in the adherens junction. It localises to the cytoplasm. Its subcellular location is the cytoskeleton. The protein localises to the apical cell membrane. Controls cell shape changes in the neuroepithelium during neural tube closure. Induces apical constriction in epithelial cells by promoting the apical accumulation of F-actin and myosin II, and probably by bundling stress fibers. Induces apicobasal cell elongation by redistributing gamma-tubulin and directing the assembly of robust apicobasal microtubule arrays. This is Protein Shroom3 (SHROOM3) from Homo sapiens (Human).